The chain runs to 360 residues: DNA replication and repair protein RecF (360 aa).

33–40 (GENGSGKT) provides a ligand contact to ATP.

This sequence belongs to the RecF family.

The protein localises to the cytoplasm. Its function is as follows. The RecF protein is involved in DNA metabolism; it is required for DNA replication and normal SOS inducibility. RecF binds preferentially to single-stranded, linear DNA. It also seems to bind ATP. This chain is DNA replication and repair protein RecF, found in Rickettsia conorii (strain ATCC VR-613 / Malish 7).